The chain runs to 456 residues: Bifunctional protein GlmU (456 aa).

The pyrophosphorylase stretch occupies residues 1-229; it reads MLNSAMSVVI…LSEVEGVNNR (229 aa). UDP-N-acetyl-alpha-D-glucosamine contacts are provided by residues 11 to 14, Lys25, Gln76, 81 to 82, 103 to 105, Gly140, Glu154, Asn169, and Asn227; these read LAAG, GT, and YGD. Residue Asp105 participates in Mg(2+) binding. Asn227 provides a ligand contact to Mg(2+). Residues 230-250 are linker; sequence LQLSALERIYQREQADKLLLA. Positions 251–456 are N-acetyltransferase; sequence GVMLLDPARF…SGWQRPVKKK (206 aa). UDP-N-acetyl-alpha-D-glucosamine contacts are provided by Arg333 and Lys351. The active-site Proton acceptor is the His363. Residues Tyr366 and Asn377 each contribute to the UDP-N-acetyl-alpha-D-glucosamine site. Acetyl-CoA is bound by residues Ala380, 386 to 387, Ser405, Ala423, and Arg440; that span reads NY.

This sequence in the N-terminal section; belongs to the N-acetylglucosamine-1-phosphate uridyltransferase family. It in the C-terminal section; belongs to the transferase hexapeptide repeat family. In terms of assembly, homotrimer. Requires Mg(2+) as cofactor.

The protein resides in the cytoplasm. The catalysed reaction is alpha-D-glucosamine 1-phosphate + acetyl-CoA = N-acetyl-alpha-D-glucosamine 1-phosphate + CoA + H(+). It catalyses the reaction N-acetyl-alpha-D-glucosamine 1-phosphate + UTP + H(+) = UDP-N-acetyl-alpha-D-glucosamine + diphosphate. Its pathway is nucleotide-sugar biosynthesis; UDP-N-acetyl-alpha-D-glucosamine biosynthesis; N-acetyl-alpha-D-glucosamine 1-phosphate from alpha-D-glucosamine 6-phosphate (route II): step 2/2. It functions in the pathway nucleotide-sugar biosynthesis; UDP-N-acetyl-alpha-D-glucosamine biosynthesis; UDP-N-acetyl-alpha-D-glucosamine from N-acetyl-alpha-D-glucosamine 1-phosphate: step 1/1. It participates in bacterial outer membrane biogenesis; LPS lipid A biosynthesis. Its function is as follows. Catalyzes the last two sequential reactions in the de novo biosynthetic pathway for UDP-N-acetylglucosamine (UDP-GlcNAc). The C-terminal domain catalyzes the transfer of acetyl group from acetyl coenzyme A to glucosamine-1-phosphate (GlcN-1-P) to produce N-acetylglucosamine-1-phosphate (GlcNAc-1-P), which is converted into UDP-GlcNAc by the transfer of uridine 5-monophosphate (from uridine 5-triphosphate), a reaction catalyzed by the N-terminal domain. In Pectobacterium atrosepticum (strain SCRI 1043 / ATCC BAA-672) (Erwinia carotovora subsp. atroseptica), this protein is Bifunctional protein GlmU.